Reading from the N-terminus, the 394-residue chain is Elongation factor Tu (394 aa).

Positions 10–204 constitute a tr-type G domain; that stretch reads KPHINVGTIG…SLDKYIPIPV (195 aa). A G1 region spans residues 19-26; the sequence is GHVDHGKT. GTP is bound at residue 19–26; that stretch reads GHVDHGKT. Position 26 (T26) interacts with Mg(2+). Residues 60 to 64 are G2; that stretch reads GITIN. A G3 region spans residues 81 to 84; it reads DCPG. Residues 81-85 and 136-139 each bind GTP; these read DCPGH and NKCD. Residues 136 to 139 form a G4 region; sequence NKCD. Residues 174–176 form a G5 region; that stretch reads SAL.

It belongs to the TRAFAC class translation factor GTPase superfamily. Classic translation factor GTPase family. EF-Tu/EF-1A subfamily. Monomer.

Its subcellular location is the cytoplasm. It carries out the reaction GTP + H2O = GDP + phosphate + H(+). Functionally, GTP hydrolase that promotes the GTP-dependent binding of aminoacyl-tRNA to the A-site of ribosomes during protein biosynthesis. This is Elongation factor Tu from Buchnera aphidicola subsp. Cinara cedri (strain Cc).